A 629-amino-acid polypeptide reads, in one-letter code: UvrABC system protein C (629 aa).

The GIY-YIG domain maps to 12-91; sequence DRPGCYLFKD…IKKHKPKYNI (80 aa). Residues 200–235 form the UVR domain; that stretch reads QEVLERLRARMEQAAERLEFERAAELRDQIRAIEKV.

Belongs to the UvrC family. Interacts with UvrB in an incision complex.

It is found in the cytoplasm. In terms of biological role, the UvrABC repair system catalyzes the recognition and processing of DNA lesions. UvrC both incises the 5' and 3' sides of the lesion. The N-terminal half is responsible for the 3' incision and the C-terminal half is responsible for the 5' incision. The sequence is that of UvrABC system protein C from Symbiobacterium thermophilum (strain DSM 24528 / JCM 14929 / IAM 14863 / T).